The chain runs to 100 residues: MYB-like transcription factor TCL2 (100 aa).

Residues 37-74 (TEQEEDLIFRMHRLVGDRWDLIAGRVVGREAKDIERYW) enclose the Myb-like domain.

Interacts with GL3. As to expression, expressed in cotyledons, petioles, rosette leaves, hydathodes, cauline leaves, stems, pedicels and flower buds.

Its subcellular location is the nucleus. MYB-type transcription factor involved in trichome cell specification. Acts as a negative regulator of trichome patterning and formation. May function by suppressing the expression of GL3. The polypeptide is MYB-like transcription factor TCL2 (TCL2) (Arabidopsis thaliana (Mouse-ear cress)).